Reading from the N-terminus, the 638-residue chain is Neuroendocrine convertase 2 (638 aa).

The signal sequence occupies residues 1–25 (MKGGCVSQWKAAAGLLFCVTVFASA). Residues 26 to 109 (ERPVFTNHFL…QQEGFDRKKR (84 aa)) constitute a propeptide that is removed on maturation. A Peptidase S8 domain is found at 129 to 453 (QWYLINTGQA…YGVLDAGAMV (325 aa)). Active-site charge relay system residues include aspartate 167 and histidine 208. 2 disulfides stabilise this stretch: cysteine 225–cysteine 376 and cysteine 317–cysteine 347. N-linked (GlcNAc...) asparagine glycosylation is present at asparagine 375. Serine 384 serves as the catalytic Charge relay system. One can recognise a P/Homo B domain in the interval 461–597 (TVPERFHCVG…TLMLHGSQSA (137 aa)). A disulfide bond links cysteine 468 and cysteine 494. N-linked (GlcNAc...) asparagine glycans are attached at residues asparagine 514 and asparagine 524.

Belongs to the peptidase S8 family. Furin subfamily.

It is found in the cytoplasmic vesicle. The protein resides in the secretory vesicle. It localises to the secreted. The enzyme catalyses Release of protein hormones and neuropeptides from their precursors, generally by hydrolysis of -Lys-Arg-|- bonds.. Its function is as follows. Serine endopeptidase which is involved in the processing of hormone and other protein precursors at sites comprised of pairs of basic amino acid residues. Responsible for the release of glucagon from proglucagon in pancreatic A cells. This chain is Neuroendocrine convertase 2 (PCSK2), found in Sus scrofa (Pig).